The sequence spans 464 residues: Secretion-regulating guanine nucleotide exchange factor (464 aa).

RCC1 repeat units follow at residues 14 to 66 (AAAL…VVTD), 68 to 118 (GSLF…ILTE), 119 to 170 (NGQV…AATA), 172 to 229 (GTVF…SLTD), 230 to 282 (AGEL…AQTV), 283 to 349 (TGKV…LAVI), and 350 to 401 (GGVC…ALCQ). Over residues 301–313 (VETREGWESEKQD) the composition is skewed to basic and acidic residues. A disordered region spans residues 301–323 (VETREGWESEKQDPSLPGSGPQK). A disordered region spans residues 411 to 464 (HPSVTSPSPDATKEARSQEAMEQERNQKERHAETSPQAQSDRFRNGGLVAETLE). Residues 421-443 (ATKEARSQEAMEQERNQKERHAE) are compositionally biased toward basic and acidic residues. Serine 427 bears the Phosphoserine mark.

In terms of assembly, interacts with SEC5. The interaction occurs only in the presence of magnesium or manganese and is stimulated by dCTP or GTP.

It localises to the cytoplasm. Its subcellular location is the nucleus. Its function is as follows. Probable guanine nucleotide exchange factor (GEF), which may be involved in the secretion process. In Bos taurus (Bovine), this protein is Secretion-regulating guanine nucleotide exchange factor (SERGEF).